Reading from the N-terminus, the 64-residue chain is Large ribosomal subunit protein bL35 (64 aa).

Composition is skewed to basic residues over residues 1-26 and 33-44; these read MPKM…KRSK and LTKKSPKRKRKL. The interval 1-44 is disordered; the sequence is MPKMKTHRGAAKRFKKTGTGKIKRSKAYTSHILTKKSPKRKRKL.

Belongs to the bacterial ribosomal protein bL35 family.

The protein is Large ribosomal subunit protein bL35 of Alkaliphilus oremlandii (strain OhILAs) (Clostridium oremlandii (strain OhILAs)).